Here is a 123-residue protein sequence, read N- to C-terminus: Small ribosomal subunit protein uS12 (123 aa).

Asp89 carries the 3-methylthioaspartic acid modification.

The protein belongs to the universal ribosomal protein uS12 family. Part of the 30S ribosomal subunit. Contacts proteins S8 and S17. May interact with IF1 in the 30S initiation complex.

Its function is as follows. With S4 and S5 plays an important role in translational accuracy. In terms of biological role, interacts with and stabilizes bases of the 16S rRNA that are involved in tRNA selection in the A site and with the mRNA backbone. Located at the interface of the 30S and 50S subunits, it traverses the body of the 30S subunit contacting proteins on the other side and probably holding the rRNA structure together. The combined cluster of proteins S8, S12 and S17 appears to hold together the shoulder and platform of the 30S subunit. The protein is Small ribosomal subunit protein uS12 of Methylobacterium nodulans (strain LMG 21967 / CNCM I-2342 / ORS 2060).